Here is a 342-residue protein sequence, read N- to C-terminus: Aspartate carbamoyltransferase catalytic subunit (342 aa).

R54 and T55 together coordinate carbamoyl phosphate. Position 82 (K82) interacts with L-aspartate. Carbamoyl phosphate contacts are provided by R104, H134, and Q137. Residues R177 and R232 each coordinate L-aspartate. The carbamoyl phosphate site is built by G277 and P278.

The protein belongs to the aspartate/ornithine carbamoyltransferase superfamily. ATCase family. As to quaternary structure, heterododecamer (2C3:3R2) of six catalytic PyrB chains organized as two trimers (C3), and six regulatory PyrI chains organized as three dimers (R2).

The enzyme catalyses carbamoyl phosphate + L-aspartate = N-carbamoyl-L-aspartate + phosphate + H(+). The protein operates within pyrimidine metabolism; UMP biosynthesis via de novo pathway; (S)-dihydroorotate from bicarbonate: step 2/3. Functionally, catalyzes the condensation of carbamoyl phosphate and aspartate to form carbamoyl aspartate and inorganic phosphate, the committed step in the de novo pyrimidine nucleotide biosynthesis pathway. In Pseudarthrobacter chlorophenolicus (strain ATCC 700700 / DSM 12829 / CIP 107037 / JCM 12360 / KCTC 9906 / NCIMB 13794 / A6) (Arthrobacter chlorophenolicus), this protein is Aspartate carbamoyltransferase catalytic subunit.